The following is a 504-amino-acid chain: MEEFQGYLEFDGARQHNFLYPFFFRESIYVLAYDHGLNRLNRNRSIFLENAGYDTKYSSLIVKRLIFRIYEQNHLIISTNDFSQNPFFGHTNHFYYQTISALFAVIVEIPFSLRLVSSFGGKQLAKSYNLQSIHSIFPFLEDKLSHLNYVLDVLIPYPIHLEILVQTLRYRVKDASSLHLLRFCLYEYWNWKNFYTQKKSILNTKFFLFLYNCHVCEYESIFFFLRKRSSHLRSTSSGVLFERIFFYRKIEHLLKVFVNNFQDILGLFKDPFIHYVRYHGKCILAAKDTPLLMNKWKYYFVNLWQWHFSVWFQWQKVHINKLSKDNLDFLGYLSSLRLNPLVVRSQMLENSFLIDNVRKEFDTKIPICSIIGSFAKEKFCNVLGYPISKSTWMDSSDSDILDRFVRICRNLSHYHSGSSKKKNLYRIKYILRLSCVKTLARKHKSTVRAFLKRLGSVLLEEFLTGEEQVLSLIFSRGYSPSQRFYRVRIWYLDIIYLNDLVNHE.

Belongs to the intron maturase 2 family. MatK subfamily.

The protein resides in the plastid. It localises to the chloroplast. In terms of biological role, usually encoded in the trnK tRNA gene intron. Probably assists in splicing its own and other chloroplast group II introns. The protein is Maturase K of Cynophalla hastata (Broadleaf caper).